The following is an 85-amino-acid chain: Homeobox protein knotted-1-like 4 (85 aa).

Residues 1–21 (ELKYQLLKKYSGYLSSLRQEF) form the ELK domain. Residues 22-85 (SKKKKKGKLP…NQRKRHWKPS (64 aa)) constitute a DNA-binding region (homeobox; TALE-type).

The protein belongs to the TALE/KNOX homeobox family. As to expression, strongly expressed in ear inflorescence primordia and shoot meristem. Weakly expressed in embryos. Absent from leaves.

Its subcellular location is the nucleus. Its function is as follows. Probably binds to the DNA sequence 5'-TGAC-3'. This Zea mays (Maize) protein is Homeobox protein knotted-1-like 4 (KNOX4).